The following is a 658-amino-acid chain: MTSLAAGKPAPLGASYDGKGVNFALFSAHAERVELCVFDEQGNEQRFDLPARSGDIWHGWLAAAGPGLRYGYRVHGPWDPAQGHRFNPAKLLIDPSAHRVEGDLPDDERLHGGMWQPDRRDSAAVAPKSQVVDLRYDWRGDKPPRTPWGETVIYEAHVKGLTLLNPQLPEAIRGTYKALGHPAMIAYFKSLGISALELLPVAQFASEPRLQRMGLSNYWGYNPLAWFALDPRYASDPDRALDEFRDAVKALHAAGIEVILDIVLNHSAEIDLEGPTVSLRGIDNRSYYWVREDSDYHNWTGCGNTLNLSHPGVVEWARQCLRFWVDECHVDGFRFDLASVMGRTPEFRQDAPLFEAIRRDSVLSQVKLIAEPWDIGPGGYQVGNFPPLFAEWNDHFRDSARRFWLQQNVSLGDFAQRFAASSDLFARDGKPPSATVNLVTAHDGFTLRDCVCFNQKHNEANGEENRDGTNNNYSNNHGIEGLEANFAVIERRRASAHALLTTLLLAQGTPMLLAGDEQGHSQHGNNNAYCQDNALTWLDWRQANPGLTAFTAALIHLRRRIPALTRNRWWQEGDGNVRWLNRNAQPLTAAEWQQGAACMQIQLSDRWLLTLNATAEVVDMVLPEGEWRAVPPFAGEDNPVIMAVWHGPAHGVCVFQRS.

Catalysis depends on Asp336, which acts as the Nucleophile. Residue Glu371 is the Proton donor of the active site.

It belongs to the glycosyl hydrolase 13 family.

It catalyses the reaction Hydrolysis of (1-&gt;6)-alpha-D-glucosidic linkages to branches with degrees of polymerization of three or four glucose residues in limit dextrin.. Its pathway is glycan degradation; glycogen degradation. Its function is as follows. Removes maltotriose and maltotetraose chains that are attached by 1,6-alpha-linkage to the limit dextrin main chain, generating a debranched limit dextrin. The chain is Glycogen debranching enzyme from Klebsiella pneumoniae subsp. pneumoniae (strain ATCC 700721 / MGH 78578).